Consider the following 135-residue polypeptide: Helix-loop-helix protein 2 (135 aa).

Residues Met-1–Ala-81 form a disordered region. A compositionally biased stretch (basic and acidic residues) spans Asp-10–Pro-21. The segment covering Lys-68 to Ala-81 has biased composition (basic residues). The bHLH domain maps to Lys-77 to Leu-129.

As to quaternary structure, homodimer. Interacts and may form heterodimers with STAT3. As to expression, expressed in developing neurons. Transiently expressed in the cerebellum during postnatal development, exclusively in the premigratory zone of the external granule layer where postmitotic neurons undergo initial stages of neuronal differentiation. Expression is not detected in mature neurons. Expressed in the anterior lobe of the adult pituitary.

The protein resides in the nucleus. In terms of biological role, transcription factor which binds the E box motif 5'-CA[TC][AG]TG-3'. Involved in regulating energy expenditure, body mass, voluntary physical activity, mating behavior and reproductive longevity, acting through the hypothalamic-pituitary-gonadal axis. Acts as a transcriptional activator of target genes, including Ndn, Pcsk1, Mc4r. Is also a transcriptional activator of KISS1. May act centrally to regulate function of both white and brown adipose tissue. Together with NHLH1, required to maintain migration and survival of cells in the anterior extramural migration stream (aes), which forms the precerebellar nuclei. Also, in concert with Nhlh1, may determine fate of gonadotropin releasing hormone-1 (GnRH-1) neurons. The sequence is that of Helix-loop-helix protein 2 (Nhlh2) from Mus musculus (Mouse).